Here is a 415-residue protein sequence, read N- to C-terminus: Putative competence-damage inducible protein (415 aa).

This sequence belongs to the CinA family.

The chain is Putative competence-damage inducible protein from Limosilactobacillus reuteri (strain DSM 20016) (Lactobacillus reuteri).